The following is a 188-amino-acid chain: Elongation factor P (188 aa).

Lys-34 is modified (N6-(3,6-diaminohexanoyl)-5-hydroxylysine).

Belongs to the elongation factor P family. May be beta-lysylated on the epsilon-amino group of Lys-34 by the combined action of EpmA and EpmB, and then hydroxylated on the C5 position of the same residue by EpmC (if this protein is present). Lysylation is critical for the stimulatory effect of EF-P on peptide-bond formation. The lysylation moiety may extend toward the peptidyltransferase center and stabilize the terminal 3-CCA end of the tRNA. Hydroxylation of the C5 position on Lys-34 may allow additional potential stabilizing hydrogen-bond interactions with the P-tRNA.

It is found in the cytoplasm. The protein operates within protein biosynthesis; polypeptide chain elongation. Involved in peptide bond synthesis. Alleviates ribosome stalling that occurs when 3 or more consecutive Pro residues or the sequence PPG is present in a protein, possibly by augmenting the peptidyl transferase activity of the ribosome. Modification of Lys-34 is required for alleviation. This chain is Elongation factor P, found in Xanthomonas oryzae pv. oryzae (strain MAFF 311018).